A 161-amino-acid polypeptide reads, in one-letter code: MPSFDVVSEANMIEVKNAIEQSNKEISTRFDFKGSDARVEQKDRELTLFADDDFKLGQVKDVLIGKMAKRNVDVRFLDYGKVEKIGGDKVKQVVTVKKGVTGDLAKKIVRLVKDSKIKVQASIQGDAVRVSGAKRDDLQSVIAMLRKDVTDTPLDFNNFRD.

The protein belongs to the YajQ family.

Functionally, nucleotide-binding protein. The polypeptide is Nucleotide-binding protein Bmul_0741/BMULJ_02519 (Burkholderia multivorans (strain ATCC 17616 / 249)).